A 102-amino-acid polypeptide reads, in one-letter code: uncharacterized protein (102 aa).

Helical transmembrane passes span 38-58 and 64-84; these read FYVWSSRIYVLVLVVQAQLIL and VLFLLLFFLHNFFLLPQLFQF.

The protein resides in the membrane. This is an uncharacterized protein from Saccharomyces cerevisiae (strain ATCC 204508 / S288c) (Baker's yeast).